The primary structure comprises 130 residues: Arginine decarboxylase proenzyme (130 aa).

Serine 78 (schiff-base intermediate with substrate; via pyruvic acid) is an active-site residue. Serine 78 is modified (pyruvic acid (Ser); by autocatalysis). Catalysis depends on histidine 83, which acts as the Proton acceptor; for processing activity. Residue cysteine 98 is the Proton donor; for catalytic activity of the active site.

Belongs to the prokaryotic AdoMetDC family. Type 1 subfamily. Heterooctamer of four alpha and four beta chains arranged as a tetramer of alpha/beta heterodimers. Pyruvate serves as cofactor. Is synthesized initially as an inactive proenzyme. Formation of the active enzyme involves a self-maturation process in which the active site pyruvoyl group is generated from an internal serine residue via an autocatalytic post-translational modification. Two non-identical subunits are generated from the proenzyme in this reaction, and the pyruvate is formed at the N-terminus of the alpha chain, which is derived from the carboxyl end of the proenzyme. The post-translation cleavage follows an unusual pathway, termed non-hydrolytic serinolysis, in which the side chain hydroxyl group of the serine supplies its oxygen atom to form the C-terminus of the beta chain, while the remainder of the serine residue undergoes an oxidative deamination to produce ammonia and the pyruvoyl group blocking the N-terminus of the alpha chain.

The enzyme catalyses L-arginine + H(+) = agmatine + CO2. Its pathway is amine and polyamine biosynthesis; agmatine biosynthesis; agmatine from L-arginine: step 1/1. Specifically catalyzes the decarboxylation of L-arginine to agmatine. Has no S-adenosylmethionine decarboxylase (AdoMetDC) activity. The protein is Arginine decarboxylase proenzyme of Sulfolobus acidocaldarius (strain ATCC 33909 / DSM 639 / JCM 8929 / NBRC 15157 / NCIMB 11770).